The primary structure comprises 220 residues: RNA-free ribonuclease P (220 aa).

This sequence belongs to the HARP family.

It catalyses the reaction Endonucleolytic cleavage of RNA, removing 5'-extranucleotides from tRNA precursor.. RNA-free RNase P that catalyzes the removal of the 5'-leader sequence from pre-tRNA to produce the mature 5'-terminus. In Methanothermobacter thermautotrophicus (strain ATCC 29096 / DSM 1053 / JCM 10044 / NBRC 100330 / Delta H) (Methanobacterium thermoautotrophicum), this protein is RNA-free ribonuclease P.